We begin with the raw amino-acid sequence, 385 residues long: Protein pelota homolog (385 aa).

Lys-162 is covalently cross-linked (Glycyl lysine isopeptide (Lys-Gly) (interchain with G-Cter in SUMO2)). 4 positions are modified to phosphoserine: Ser-374, Ser-380, Ser-381, and Ser-382.

The protein belongs to the eukaryotic release factor 1 family. Pelota subfamily. As to quaternary structure, component of the Pelota-HBS1L complex, also named Dom34-Hbs1 complex, composed of PELO and HBS1L. Interacts with PINK1. Interacts with ABCE1. Interacts with CNOT4. Requires a divalent metal cation as cofactor.

It is found in the cytoplasm. In terms of biological role, component of the Pelota-HBS1L complex, a complex that recognizes stalled ribosomes and triggers the No-Go Decay (NGD) pathway. In the Pelota-HBS1L complex, PELO recognizes ribosomes stalled at the 3' end of an mRNA and engages stalled ribosomes by destabilizing mRNA in the mRNA channel. Following mRNA extraction from stalled ribosomes by the SKI complex, the Pelota-HBS1L complex promotes recruitment of ABCE1, which drives the disassembly of stalled ribosomes, followed by degradation of damaged mRNAs as part of the NGD pathway. As part of the PINK1-regulated signaling, upon mitochondrial damage is recruited to the ribosome/mRNA-ribonucleoprotein complex associated to mitochondrial outer membrane thereby enabling the recruitment of autophagy receptors and induction of mitophagy. This is Protein pelota homolog (PELO) from Pongo abelii (Sumatran orangutan).